The primary structure comprises 393 residues: MTTSVIVAGARTPIGKLMGSLKDFSASELGAIAIKGALEKANVPASLVEYVIMGQVLTAGAGQMPARQAAVAAGIGWDVPALTINKMCLSGIDAIALADQLIRAREFDVVVAGGQESMTKAPHLLMNSRSGYKYGDVTVLDHMAYDGLHDVFTDQPMGALTEQRNDVDMFTRSEQDEYAAASHQKAAAAWKDGVFADEVIPVNIPQRTGDPLQFTEDEGIRANTTAAALAGLKPAFRGDGTITAGSASQISDGAAAVVVMNQEKAQELGLTWLAEIGAHGVVAGPDSTLQSQPANAINKALDREGISVDQLDVVEINEAFAAVALASIRELGLNPQIVNVNGGAIAVGHPLGMSGTRITLHAALQLARRGSGVGVAALCGAGGQGDALILRAG.

Position 2 (T2) is a propeptide, removed; alternate. Catalysis depends on C88, which acts as the Acyl-thioester intermediate. Residues H349 and C379 each act as proton acceptor in the active site.

The protein belongs to the thiolase-like superfamily. Thiolase family.

It carries out the reaction 2 acetyl-CoA = acetoacetyl-CoA + CoA. The sequence is that of Probable acetyl-CoA acetyltransferase (fadA4) from Mycobacterium tuberculosis (strain ATCC 25618 / H37Rv).